A 96-amino-acid polypeptide reads, in one-letter code: Small cysteine and glycine repeat-containing protein 7 (96 aa).

The 14 X 2 AA repeats of CG stretch occupies residues 4–80 (CGCGSCGGCG…TCGSCGCGCG (77 aa)).

The protein belongs to the KRTAP type 28 family.

In terms of biological role, in the hair cortex, hair keratin intermediate filaments are embedded in an interfilamentous matrix, consisting of hair keratin-associated proteins (KRTAP), which are essential for the formation of a rigid and resistant hair shaft through their extensive disulfide bond cross-linking with abundant cysteine residues of hair keratins. The matrix proteins include the high-sulfur and high-glycine-tyrosine keratins. The chain is Small cysteine and glycine repeat-containing protein 7 from Homo sapiens (Human).